Reading from the N-terminus, the 1388-residue chain is Kinesin-like protein KIF15 (1388 aa).

The tract at residues 1–25 is disordered; that stretch reads MAPGCKTELRSVTNGQSNQPSNEGD. Over residues 10 to 22 the composition is skewed to polar residues; that stretch reads RSVTNGQSNQPSN. Residues 26 to 363 enclose the Kinesin motor domain; that stretch reads AIKVFVRIRP…LNFAQRAKLI (338 aa). ATP is bound at residue 109 to 116; the sequence is GQTGSGKT. Positions 368 to 1388 form a coiled coil; that stretch reads VVNEDTQGNV…FLKEKKRSES (1021 aa). Residue T399 is modified to Phosphothreonine. Position 568 is a phosphoserine (S568). K1009 bears the N6-acetyllysine mark. 2 positions are modified to phosphoserine: S1141 and S1169. The tract at residues 1228–1250 is disordered; sequence QKENSDQNHPDNQQLKNEQEESI.

It belongs to the TRAFAC class myosin-kinesin ATPase superfamily. Kinesin family. KLP2 subfamily. Interacts with MKI67 and TPX2. Expressed in testis, colon, thymus and in breast cancer.

Its subcellular location is the cytoplasm. The protein localises to the cytoskeleton. The protein resides in the spindle. Plus-end directed kinesin-like motor enzyme involved in mitotic spindle assembly. The chain is Kinesin-like protein KIF15 (KIF15) from Homo sapiens (Human).